The following is a 185-amino-acid chain: Adenine phosphoribosyltransferase (185 aa).

This sequence belongs to the purine/pyrimidine phosphoribosyltransferase family. Homodimer.

Its subcellular location is the cytoplasm. The enzyme catalyses AMP + diphosphate = 5-phospho-alpha-D-ribose 1-diphosphate + adenine. Its pathway is purine metabolism; AMP biosynthesis via salvage pathway; AMP from adenine: step 1/1. Its function is as follows. Catalyzes a salvage reaction resulting in the formation of AMP, that is energically less costly than de novo synthesis. The protein is Adenine phosphoribosyltransferase of Pectobacterium atrosepticum (strain SCRI 1043 / ATCC BAA-672) (Erwinia carotovora subsp. atroseptica).